The chain runs to 155 residues: Histone H2B.5 (155 aa).

Composition is skewed to basic and acidic residues over residues Met-1–Pro-28 and Glu-36–Asp-54. Positions Met-1–Lys-63 are disordered. An N6-acetyllysine mark is found at Lys-7 and Lys-37. Lys-151 is covalently cross-linked (Glycyl lysine isopeptide (Lys-Gly) (interchain with G-Cter in ubiquitin)).

Belongs to the histone H2B family. In terms of assembly, the nucleosome is a histone octamer containing two molecules each of H2A, H2B, H3 and H4 assembled in one H3-H4 heterotetramer and two H2A-H2B heterodimers. The octamer wraps approximately 147 bp of DNA. In terms of processing, can be acetylated to form H2BK6ac and H2BK33ac. Post-translationally, monoubiquitinated by BRE1 to form H2BK143ub1 and deubiquitinated by UBP26. Required for heterochromatic histone H3 di- and trimethylation at H3K4me. May give a specific tag for epigenetic transcriptional activation.

It localises to the nucleus. Its subcellular location is the chromosome. Core component of nucleosome. Nucleosomes wrap and compact DNA into chromatin, limiting DNA accessibility to the cellular machineries which require DNA as a template. Histones thereby play a central role in transcription regulation, DNA repair, DNA replication and chromosomal stability. DNA accessibility is regulated via a complex set of post-translational modifications of histones, also called histone code, and nucleosome remodeling. In Oryza sativa subsp. japonica (Rice), this protein is Histone H2B.5 (H2B.5).